A 332-amino-acid chain; its full sequence is Ferredoxin--NADP reductase (332 aa).

Residues D33, Q41, Y46, A86, M121, D282, and S325 each coordinate FAD.

It belongs to the ferredoxin--NADP reductase type 2 family. In terms of assembly, homodimer. Requires FAD as cofactor.

It catalyses the reaction 2 reduced [2Fe-2S]-[ferredoxin] + NADP(+) + H(+) = 2 oxidized [2Fe-2S]-[ferredoxin] + NADPH. This is Ferredoxin--NADP reductase from Sulfurisphaera tokodaii (strain DSM 16993 / JCM 10545 / NBRC 100140 / 7) (Sulfolobus tokodaii).